The primary structure comprises 324 residues: MNYAKISQVAHYAPRQVVSNDDLAEIMDTSDEWISSRTGIKNRHLSSDETTSDLATKVAENLLQKSGISAQDLDFIIVATITPDSLMPSAAARVQANIGAKNAFAFDLTAACSGFIFALSTGEKFISSGRYQKGLVIGSETLSKTVDWSDRSTAVLFGDGAGGVLLESASEQHFLAESQFTDGSRGDSLTCGKIGLSSPFSEKGENQPYLTMDGRAIFDFAIRDVARSIKETIESSQLSAEDLDFLLLHQANIRILDKMAKKLGVAREKLPANMMEYGNTSAASIPILLSECVEQGLIKLNGNQTILMSGFGGGLTWGTLIVTI.

Residues Cys-112 and His-249 contribute to the active site. An ACP-binding region spans residues 250 to 254; that stretch reads QANIR. Asn-279 is an active-site residue.

This sequence belongs to the thiolase-like superfamily. FabH family. As to quaternary structure, homodimer.

The protein localises to the cytoplasm. It carries out the reaction malonyl-[ACP] + acetyl-CoA + H(+) = 3-oxobutanoyl-[ACP] + CO2 + CoA. It participates in lipid metabolism; fatty acid biosynthesis. Functionally, catalyzes the condensation reaction of fatty acid synthesis by the addition to an acyl acceptor of two carbons from malonyl-ACP. Catalyzes the first condensation reaction which initiates fatty acid synthesis and may therefore play a role in governing the total rate of fatty acid production. Possesses both acetoacetyl-ACP synthase and acetyl transacylase activities. Its substrate specificity determines the biosynthesis of branched-chain and/or straight-chain of fatty acids. This chain is Beta-ketoacyl-[acyl-carrier-protein] synthase III, found in Streptococcus sanguinis (strain SK36).